Reading from the N-terminus, the 69-residue chain is DNA gyrase inhibitor YacG (69 aa).

Zn(2+)-binding residues include Cys13, Cys16, Cys32, and Cys36.

It belongs to the DNA gyrase inhibitor YacG family. In terms of assembly, interacts with GyrB. Zn(2+) is required as a cofactor.

Inhibits all the catalytic activities of DNA gyrase by preventing its interaction with DNA. Acts by binding directly to the C-terminal domain of GyrB, which probably disrupts DNA binding by the gyrase. The protein is DNA gyrase inhibitor YacG of Neisseria meningitidis serogroup A / serotype 4A (strain DSM 15465 / Z2491).